A 257-amino-acid chain; its full sequence is uncharacterized protein (257 aa).

The chain crosses the membrane as a helical span at residues 7–27; the sequence is IGILEIVVILSILITSVSLAY.

The protein localises to the membrane. This is an uncharacterized protein from Methanocaldococcus jannaschii (strain ATCC 43067 / DSM 2661 / JAL-1 / JCM 10045 / NBRC 100440) (Methanococcus jannaschii).